A 187-amino-acid polypeptide reads, in one-letter code: Ribosome-recycling factor (187 aa).

Belongs to the RRF family.

It localises to the cytoplasm. Functionally, responsible for the release of ribosomes from messenger RNA at the termination of protein biosynthesis. May increase the efficiency of translation by recycling ribosomes from one round of translation to another. The polypeptide is Ribosome-recycling factor (Rhodopseudomonas palustris (strain HaA2)).